Consider the following 425-residue polypeptide: Histidine--tRNA ligase (425 aa).

Belongs to the class-II aminoacyl-tRNA synthetase family. As to quaternary structure, homodimer.

It is found in the cytoplasm. The catalysed reaction is tRNA(His) + L-histidine + ATP = L-histidyl-tRNA(His) + AMP + diphosphate + H(+). This Erwinia tasmaniensis (strain DSM 17950 / CFBP 7177 / CIP 109463 / NCPPB 4357 / Et1/99) protein is Histidine--tRNA ligase.